Consider the following 402-residue polypeptide: MVAIVTLTRQVLLTIALALFAQGAAIPEEAAKRDDNPGFVALDFDVLRKPLNLTEALLREKRDSISLSLINEGPSYASKVSVGSNKQQQTVIIDTGSSDFWVVDSNAQCGKGVDCKSSGTFTPSSSSSYKNLGAAFTIRYGDGSTSQGTWGKDTVTINGVSITGQQIADVTQTSVDQGILGIGYTSNEAVYDTSGRQTTPNYDNVPVTLKKQGKIRTNAYSLYLNSPSAETGTIIFGGVDNAKYSGKLVAEQVTSSQPLTISLASVNLKGSSFSFGDGALLDSGTTLTYFPSDFAAQLADKAGARLVQVARDQYLYFIDCNTDTSGTTVFNFGNGAKITVPNTEYVYQNGDGTCLWGIQPSDDTILGDNFLRHAYYLLYNLDANTISIAQVKYTTDSSISAV.

The or 18, or 21 signal peptide spans 1–25 (MVAIVTLTRQVLLTIALALFAQGAA). A propeptide spans 26–62 (IPEEAAKRDDNPGFVALDFDVLRKPLNLTEALLREKR) (activation peptide). N-linked (GlcNAc...) asparagine glycosylation occurs at Asn52. The 314-residue stretch at 76-389 (YASKVSVGSN…NLDANTISIA (314 aa)) folds into the Peptidase A1 domain. The active site involves Asp94. Cys109 and Cys115 are joined by a disulfide. Asp282 is an active-site residue. A disulfide bridge links Cys320 with Cys354.

This sequence belongs to the peptidase A1 family. O-glycosylated.

It localises to the secreted. It catalyses the reaction Preferential cleavage at the carboxyl of hydrophobic amino acids, but fails to cleave 15-Leu-|-Tyr-16, 16-Tyr-|-Leu-17 and 24-Phe-|-Phe-25 of insulin B chain. Activates trypsinogen, and degrades keratin.. The polypeptide is Candidapepsin-1 (SAPP1) (Candida parapsilosis (Yeast)).